A 440-amino-acid chain; its full sequence is Ferredoxin--NADP reductase (440 aa).

One can recognise a CpcD-like domain in the interval 17-75 (SRVFVYEVVGMRQNEETDQTNYPIRKSGSVFIRVPYNRMNQEMQRITRLGGKIVTIQTV). Residues 99–142 (KSEGNGKATPVKTDSGAKAFAKPPAEEQLKKKDNKGNTMTQAKA) are disordered. A compositionally biased stretch (basic and acidic residues) spans 122–133 (PAEEQLKKKDNK). The FAD-binding FR-type domain occupies 155-279 (NAPFIGKVIS…TGPVGKEMLL (125 aa)). Residues 214-217 (RLYS), 235-237 (CVR), Tyr-241, 253-255 (VCS), and Thr-294 each bind FAD. NADP(+) contacts are provided by Ser-217 and Arg-237. Residues Thr-294, 330–331 (VP), 360–361 (SR), 370–374 (RMYIQ), 399–400 (GL), and Glu-438 contribute to the NADP(+) site.

It belongs to the ferredoxin--NADP reductase type 1 family. It depends on FAD as a cofactor.

It localises to the cellular thylakoid membrane. It catalyses the reaction 2 reduced [2Fe-2S]-[ferredoxin] + NADP(+) + H(+) = 2 oxidized [2Fe-2S]-[ferredoxin] + NADPH. This chain is Ferredoxin--NADP reductase (petH), found in Nostoc sp. (strain ATCC 29151 / PCC 7119) (Anabaena sp.).